We begin with the raw amino-acid sequence, 440 residues long: uncharacterized protein (440 aa).

An N-terminal signal peptide occupies residues 1-19 (MKKLLLAASIIYFASVSLA).

This is an uncharacterized protein from Rickettsia typhi (strain ATCC VR-144 / Wilmington).